The following is a 188-amino-acid chain: ATP synthase subunit b (188 aa).

A helical transmembrane segment spans residues 19 to 39 (VYVLGATIVSFLVLFLFITYF).

This sequence belongs to the ATPase B chain family. F-type ATPases have 2 components, F(1) - the catalytic core - and F(0) - the membrane proton channel. F(1) has five subunits: alpha(3), beta(3), gamma(1), delta(1), epsilon(1). F(0) has three main subunits: a(1), b(2) and c(10-14). The alpha and beta chains form an alternating ring which encloses part of the gamma chain. F(1) is attached to F(0) by a central stalk formed by the gamma and epsilon chains, while a peripheral stalk is formed by the delta and b chains.

Its subcellular location is the cell membrane. Functionally, f(1)F(0) ATP synthase produces ATP from ADP in the presence of a proton or sodium gradient. F-type ATPases consist of two structural domains, F(1) containing the extramembraneous catalytic core and F(0) containing the membrane proton channel, linked together by a central stalk and a peripheral stalk. During catalysis, ATP synthesis in the catalytic domain of F(1) is coupled via a rotary mechanism of the central stalk subunits to proton translocation. Component of the F(0) channel, it forms part of the peripheral stalk, linking F(1) to F(0). This Mesomycoplasma hyopneumoniae (strain 7448) (Mycoplasma hyopneumoniae) protein is ATP synthase subunit b.